Here is a 416-residue protein sequence, read N- to C-terminus: MPEKSLYEMAVEQFNRAASLMDLESDLAEVLRRPKRVLIVEFPVRMDDGHVEVFTGYRVQHNVARGPAKGGIRYHPDVTLDEVKALAFWMTWKTAVMNLPFGGGKGGVRVDPKKLSRNELERLSRRFFSEIQVIIGPYNDIPAPDVNTNADVMAWYMDTYSMNVGHTVLGIVTGKPVELGGSKGREEATGRGVKVCAGLAMDVLGIDPKKATVAVQGFGNVGQFAALLISQELGSKVVAVSDSRGGIYNPEGFDVEELIRYKKEHGTVVTYPKGERITNEELLELDVDILVPAALEGAIHAGNAERIKAKAVVEGANGPTTPEADEILSRRGILVVPDILANAGGVTVSYFEWVQDLQSFFWDLDQVRNALEKMMKGAFNDVMKVKEKYNVDMRTAAYILAIDRVAYATKKRGIYP.

Lys105 is a catalytic residue.

This sequence belongs to the Glu/Leu/Phe/Val dehydrogenases family. Homohexamer.

The catalysed reaction is L-glutamate + NAD(+) + H2O = 2-oxoglutarate + NH4(+) + NADH + H(+). It carries out the reaction L-glutamate + NADP(+) + H2O = 2-oxoglutarate + NH4(+) + NADPH + H(+). This is Glutamate dehydrogenase (gdhA) from Thermotoga maritima (strain ATCC 43589 / DSM 3109 / JCM 10099 / NBRC 100826 / MSB8).